Consider the following 65-residue polypeptide: Photosystem II reaction center protein J (65 aa).

Positions 1–17 (MSTKLKGPDGRIPDRLP) are enriched in basic and acidic residues. Positions 1 to 20 (MSTKLKGPDGRIPDRLPDGT) are disordered. The chain crosses the membrane as a helical span at residues 36–56 (LWLVATVGGMAVLSVLGLFFF).

Belongs to the PsbJ family. In terms of assembly, PSII is composed of 1 copy each of membrane proteins PsbA, PsbB, PsbC, PsbD, PsbE, PsbF, PsbH, PsbI, PsbJ, PsbK, PsbL, PsbM, PsbT, PsbX, PsbY, Psb30/Ycf12, peripheral proteins PsbO, CyanoQ (PsbQ), PsbU, PsbV and a large number of cofactors. It forms dimeric complexes.

It is found in the cellular thylakoid membrane. One of the components of the core complex of photosystem II (PSII). PSII is a light-driven water:plastoquinone oxidoreductase that uses light energy to abstract electrons from H(2)O, generating O(2) and a proton gradient subsequently used for ATP formation. It consists of a core antenna complex that captures photons, and an electron transfer chain that converts photonic excitation into a charge separation. The protein is Photosystem II reaction center protein J of Prochlorococcus marinus (strain MIT 9303).